Consider the following 207-residue polypeptide: Thiamine-phosphate synthase (207 aa).

4-amino-2-methyl-5-(diphosphooxymethyl)pyrimidine-binding positions include 35 to 39 and N67; that span reads QYRDK. The Mg(2+) site is built by D68 and D86. A 4-amino-2-methyl-5-(diphosphooxymethyl)pyrimidine-binding site is contributed by T105. Residue 132-134 participates in 2-[(2R,5Z)-2-carboxy-4-methylthiazol-5(2H)-ylidene]ethyl phosphate binding; sequence SNT. K135 contacts 4-amino-2-methyl-5-(diphosphooxymethyl)pyrimidine. G162 lines the 2-[(2R,5Z)-2-carboxy-4-methylthiazol-5(2H)-ylidene]ethyl phosphate pocket.

The protein belongs to the thiamine-phosphate synthase family. Mg(2+) is required as a cofactor.

It carries out the reaction 2-[(2R,5Z)-2-carboxy-4-methylthiazol-5(2H)-ylidene]ethyl phosphate + 4-amino-2-methyl-5-(diphosphooxymethyl)pyrimidine + 2 H(+) = thiamine phosphate + CO2 + diphosphate. The enzyme catalyses 2-(2-carboxy-4-methylthiazol-5-yl)ethyl phosphate + 4-amino-2-methyl-5-(diphosphooxymethyl)pyrimidine + 2 H(+) = thiamine phosphate + CO2 + diphosphate. It catalyses the reaction 4-methyl-5-(2-phosphooxyethyl)-thiazole + 4-amino-2-methyl-5-(diphosphooxymethyl)pyrimidine + H(+) = thiamine phosphate + diphosphate. Its pathway is cofactor biosynthesis; thiamine diphosphate biosynthesis; thiamine phosphate from 4-amino-2-methyl-5-diphosphomethylpyrimidine and 4-methyl-5-(2-phosphoethyl)-thiazole: step 1/1. In terms of biological role, condenses 4-methyl-5-(beta-hydroxyethyl)thiazole monophosphate (THZ-P) and 2-methyl-4-amino-5-hydroxymethyl pyrimidine pyrophosphate (HMP-PP) to form thiamine monophosphate (TMP). This chain is Thiamine-phosphate synthase, found in Pseudomonas fluorescens (strain Pf0-1).